Consider the following 123-residue polypeptide: UPF0102 protein mma_0204 (123 aa).

Belongs to the UPF0102 family.

The polypeptide is UPF0102 protein mma_0204 (Janthinobacterium sp. (strain Marseille) (Minibacterium massiliensis)).